We begin with the raw amino-acid sequence, 94 residues long: Large ribosomal subunit protein uL23 (94 aa).

The protein belongs to the universal ribosomal protein uL23 family. As to quaternary structure, part of the 50S ribosomal subunit. Contacts protein L29, and trigger factor when it is bound to the ribosome.

One of the early assembly proteins it binds 23S rRNA. One of the proteins that surrounds the polypeptide exit tunnel on the outside of the ribosome. Forms the main docking site for trigger factor binding to the ribosome. This Listeria innocua serovar 6a (strain ATCC BAA-680 / CLIP 11262) protein is Large ribosomal subunit protein uL23.